Consider the following 217-residue polypeptide: N-(5'-phosphoribosyl)anthranilate isomerase (217 aa).

It belongs to the TrpF family.

The enzyme catalyses N-(5-phospho-beta-D-ribosyl)anthranilate = 1-(2-carboxyphenylamino)-1-deoxy-D-ribulose 5-phosphate. It functions in the pathway amino-acid biosynthesis; L-tryptophan biosynthesis; L-tryptophan from chorismate: step 3/5. The chain is N-(5'-phosphoribosyl)anthranilate isomerase from Chlorobium phaeovibrioides (strain DSM 265 / 1930) (Prosthecochloris vibrioformis (strain DSM 265)).